Reading from the N-terminus, the 154-residue chain is Endoribonuclease YbeY (154 aa).

Zn(2+)-binding residues include histidine 113, histidine 117, and histidine 123.

The protein belongs to the endoribonuclease YbeY family. Requires Zn(2+) as cofactor.

It localises to the cytoplasm. Functionally, single strand-specific metallo-endoribonuclease involved in late-stage 70S ribosome quality control and in maturation of the 3' terminus of the 16S rRNA. The sequence is that of Endoribonuclease YbeY from Vibrio cholerae serotype O1 (strain ATCC 39315 / El Tor Inaba N16961).